The primary structure comprises 292 residues: Glutamate racemase (292 aa).

Residues 28–29 (DS) and 60–61 (YG) each bind substrate. The Proton donor/acceptor role is filled by Cys-91. 92-93 (NT) is a binding site for substrate. Catalysis depends on Cys-200, which acts as the Proton donor/acceptor. Residue 201 to 202 (TH) coordinates substrate.

It belongs to the aspartate/glutamate racemases family.

The catalysed reaction is L-glutamate = D-glutamate. It participates in cell wall biogenesis; peptidoglycan biosynthesis. Its function is as follows. Provides the (R)-glutamate required for cell wall biosynthesis. The protein is Glutamate racemase of Trichormus variabilis (strain ATCC 29413 / PCC 7937) (Anabaena variabilis).